A 186-amino-acid polypeptide reads, in one-letter code: Large ribosomal subunit protein eL15 (186 aa).

A disordered region spans residues 163-186 (RGLTSAGKKGRGLNKKGKGAEKVR). Over residues 170-179 (KKGRGLNKKG) the composition is skewed to basic residues.

It belongs to the eukaryotic ribosomal protein eL15 family.

The sequence is that of Large ribosomal subunit protein eL15 from Methanosphaera stadtmanae (strain ATCC 43021 / DSM 3091 / JCM 11832 / MCB-3).